The following is a 560-amino-acid chain: Probable sulfate transporter MT1781 (560 aa).

A run of 11 helical transmembrane segments spans residues 29 to 49 (VLAG…YATV), 51 to 71 (GLPP…YALL), 79 to 99 (IGPE…MAAG), 105 to 125 (AVLA…AGTA), 138 to 158 (VLVG…LGTI), 184 to 204 (WPTF…TRWA), 207 to 227 (APGP…MSLD), 256 to 276 (ALII…VLTA), 333 to 353 (LIAL…LAMF), 355 to 375 (IAAL…LSEF), and 394 to 414 (AAVL…LSIL). The STAS domain maps to 442 to 557 (DYPQAKRVPG…MTLPTAVQAF (116 aa)).

This sequence belongs to the SLC26A/SulP transporter (TC 2.A.53) family.

It is found in the cell membrane. The sequence is that of Probable sulfate transporter MT1781 from Mycobacterium tuberculosis (strain CDC 1551 / Oshkosh).